The following is a 596-amino-acid chain: Glomulin (596 aa).

Residue Ala2 is modified to N-acetylalanine. The segment at Ala2–Met555 is alpha-helical region with structural similarity to HEAT repeats. The important for interaction with RBX1 stretch occupies residues Ile299–Lys596.

As to quaternary structure, interacts with FKBP4 and FKBP1A. Interacts with RBX1 (via RING domain). Identified in complexes that contain RBX1 plus one of the cullins CUL1, CUL2, CUL3, and CUL4A. Identified in a SCF complex composed of CUL1, RBX1, SKP1, FBXW7 and GLMN. Component of a SCF-like complex consisting of CUL7, RBX1, SKP1, FBXW8 and GLMN. Interacts with unphosphorylated MET and is released upon MET phosphorylation. Post-translationally, phosphorylated on tyrosine residues. In terms of tissue distribution, ubiquitous. Detected in embryonic vasculature and embryonic perichondrium, and in adult eye, brain, heart, testis, kidney, smooth muscle and skeletal muscle.

Its function is as follows. Regulatory component of cullin-RING-based SCF (SKP1-Cullin-F-box protein) E3 ubiquitin-protein ligase complexes. Inhibits E3 ubiquitin ligase activity by binding to the RING domain of RBX1 and inhibiting its interaction with the E2 ubiquitin-conjugating enzyme CDC34. Inhibits RBX1-mediated neddylation of CUL1. Required for normal stability and normal cellular levels of key components of SCF ubiquitin ligase complexes, including FBXW7, RBX1, CUL1, CUL2, CUL3, CUL4A, and thereby contributes to the regulation of CCNE1 and MYC levels. Essential for normal development of the vasculature. Contributes to the regulation of RPS6KB1 phosphorylation. This is Glomulin (Glmn) from Mus musculus (Mouse).